The primary structure comprises 408 residues: Putative FBD-associated F-box protein At5g50270 (408 aa).

One can recognise an F-box domain in the interval 1–54 (MDRISGLPDELLLRVLSLLPNVKDVVVTMVLSKRWQFLWMMVPKLVYDDSYQNL). Residues 345-408 (PLRDDLSSVP…VNPDKKYEMI (64 aa)) enclose the FBD domain.

The protein is Putative FBD-associated F-box protein At5g50270 of Arabidopsis thaliana (Mouse-ear cress).